A 172-amino-acid polypeptide reads, in one-letter code: Translation initiation factor IF-3 (172 aa).

It belongs to the IF-3 family. As to quaternary structure, monomer.

The protein resides in the cytoplasm. Its function is as follows. IF-3 binds to the 30S ribosomal subunit and shifts the equilibrium between 70S ribosomes and their 50S and 30S subunits in favor of the free subunits, thus enhancing the availability of 30S subunits on which protein synthesis initiation begins. This Bartonella tribocorum (strain CIP 105476 / IBS 506) protein is Translation initiation factor IF-3.